The following is a 478-amino-acid chain: Divinyl ether synthase CYP74D2 (478 aa).

Position 431 (C431) interacts with heme.

Belongs to the cytochrome P450 family. 9-divinyl ether synthase subfamily. Expressed in roots.

The catalysed reaction is (9S)-hydroperoxy-(10E,12Z)-octadecadienoate = colneleate + H2O. The enzyme catalyses (9S)-hydroperoxy-(10E,12Z,15Z)-octadecatrienoate = colnelenate + H2O. In terms of biological role, involved in the biosynthesis of the anti-fungal and antibacterial toxins colneleate and colnelenate. Can use (9S)-hydroperoxy-(10E,12Z)-octadecadienoate (9-HPOD) and (9S)-hydroperoxy-(10E,12Z,15Z)-octadecatrienoate (9-HPOT) as substrates but has no activity with the corresponding 13-hydroperoxides (13-HPOD and 13-HPOT). This is Divinyl ether synthase CYP74D2 from Solanum tuberosum (Potato).